The primary structure comprises 536 residues: Heparanase-like protein 3 (536 aa).

The signal sequence occupies residues 1–24 (MAYRQILAIVLFLCVFQFLDCTVS). 4 N-linked (GlcNAc...) asparagine glycosylation sites follow: Asn30, Asn122, Asn176, and Asn191. Glu202 (proton donor) is an active-site residue. Residues Asn265 and Asn308 are each glycosylated (N-linked (GlcNAc...) asparagine). The active-site Nucleophile is Glu319. N-linked (GlcNAc...) asparagine glycans are attached at residues Asn370, Asn427, Asn438, and Asn510.

This sequence belongs to the glycosyl hydrolase 79 family.

The protein resides in the lysosome membrane. It localises to the secreted. Endoglycosidase which is a cell surface and extracellular matrix-degrading enzyme. Cleaves heparan sulfate proteoglycans (HSPGs) into heparan sulfate side chains and core proteoglycans. In Arabidopsis thaliana (Mouse-ear cress), this protein is Heparanase-like protein 3.